Here is a 424-residue protein sequence, read N- to C-terminus: Na(+), Li(+), K(+)/H(+) antiporter (424 aa).

12 consecutive transmembrane segments (helical) span residues 15 to 35 (VGEF…AIYF), 42 to 62 (GLAG…NLFG), 74 to 94 (MLVS…LANS), 105 to 125 (VAFT…QAMI), 141 to 161 (FYTT…VLFF), 165 to 185 (FELL…LRFY), 227 to 247 (LLFV…DLVI), 274 to 294 (TSFG…TVVI), 305 to 325 (WVFF…PMTS), 327 to 347 (FWIF…VVGL), 367 to 389 (AASL…TAWF), and 393 to 415 (WTFI…MFHL).

This sequence belongs to the major facilitator superfamily.

Its subcellular location is the cell membrane. With respect to regulation, norfloxacin transport is inhibited by CCCP. Functionally, exhibits dual functions as a Na(+)(Li(+)/K(+))/H(+) antiporter and a multidrug efflux pump. Catalyzes the efflux of Na(+), Li(+) and K(+) in exchange for external protons. Shows a preference for Na(+), followed by K(+) and Li(+). Can also function as a multidrug efflux pump. Transports ethidium bromide and norfloxacin. The sequence is that of Na(+), Li(+), K(+)/H(+) antiporter from Planococcus maritimus.